The following is a 306-amino-acid chain: Acetylglutamate kinase (306 aa).

Substrate is bound by residues 68–69 (GG), Arg-90, and Asn-195.

It belongs to the acetylglutamate kinase family. ArgB subfamily.

The protein resides in the cytoplasm. The catalysed reaction is N-acetyl-L-glutamate + ATP = N-acetyl-L-glutamyl 5-phosphate + ADP. The protein operates within amino-acid biosynthesis; L-arginine biosynthesis; N(2)-acetyl-L-ornithine from L-glutamate: step 2/4. In terms of biological role, catalyzes the ATP-dependent phosphorylation of N-acetyl-L-glutamate. This is Acetylglutamate kinase from Chromohalobacter salexigens (strain ATCC BAA-138 / DSM 3043 / CIP 106854 / NCIMB 13768 / 1H11).